The following is a 104-amino-acid chain: L-rhamnose mutarotase (104 aa).

Tyr-18 contributes to the substrate binding site. The Proton donor role is filled by His-22. Substrate contacts are provided by residues Tyr-41 and 76 to 77 (WW).

The protein belongs to the rhamnose mutarotase family. As to quaternary structure, homodimer.

The protein resides in the cytoplasm. The enzyme catalyses alpha-L-rhamnose = beta-L-rhamnose. The protein operates within carbohydrate metabolism; L-rhamnose metabolism. Its function is as follows. Involved in the anomeric conversion of L-rhamnose. This chain is L-rhamnose mutarotase, found in Shigella dysenteriae serotype 1 (strain Sd197).